Reading from the N-terminus, the 245-residue chain is Nisin immunity protein (245 aa).

An N-terminal signal peptide occupies residues 1-19 (MRRYLILIVALIGITGLSG). A lipid anchor (N-palmitoyl cysteine) is attached at Cys-20. Cys-20 is lipidated: S-diacylglycerol cysteine.

It is found in the cell membrane. Functionally, involved in immunity against exogenously supplied nisin. This is Nisin immunity protein (nisI) from Lactococcus lactis subsp. lactis (Streptococcus lactis).